The sequence spans 240 residues: Ribonuclease HII (240 aa).

The 190-residue stretch at 21 to 210 folds into the RNase H type-2 domain; that stretch reads GLVAGVDEAG…VAAAVQRTVV (190 aa). A divalent metal cation contacts are provided by D27, E28, and D119.

The protein belongs to the RNase HII family. The cofactor is Mn(2+). It depends on Mg(2+) as a cofactor.

Its subcellular location is the cytoplasm. It catalyses the reaction Endonucleolytic cleavage to 5'-phosphomonoester.. Endonuclease that specifically degrades the RNA of RNA-DNA hybrids. The protein is Ribonuclease HII of Paracidovorax citrulli (strain AAC00-1) (Acidovorax citrulli).